We begin with the raw amino-acid sequence, 951 residues long: Plasma membrane ATPase (951 aa).

4 consecutive transmembrane segments (helical) span residues 61 to 81 (FLGF…IMAI), 93 to 113 (WEDF…SFIE), 243 to 263 (IGNF…IVMF), and 277 to 297 (LLVL…SVTM). The active-site 4-aspartylphosphate intermediate is aspartate 329. Mg(2+)-binding residues include aspartate 588 and aspartate 592. Helical transmembrane passes span 647-667 (IYAV…ALIW), 671-691 (FSPF…MTIS), 709-729 (IFAT…IFFW), 752-772 (EMMS…IFVT), 785-805 (LLLV…AVYA), and 814-834 (GIGW…YFPL).

This sequence belongs to the cation transport ATPase (P-type) (TC 3.A.3) family. Type IIIA subfamily.

The protein resides in the cell membrane. It catalyses the reaction ATP + H2O + H(+)(in) = ADP + phosphate + 2 H(+)(out). Functionally, the plasma membrane ATPase of plants and fungi is a hydrogen ion pump. The proton gradient it generates drives the active transport of nutrients by H(+)-symport. The resulting external acidification and/or internal alkinization may mediate growth responses. This is Plasma membrane ATPase from Oryza sativa subsp. japonica (Rice).